Consider the following 102-residue polypeptide: NADH-quinone oxidoreductase subunit K (102 aa).

The next 3 membrane-spanning stretches (helical) occupy residues 6–26, 30–50, and 63–83; these read LIGM…GVLA, ILFQ…AFVA, and MLIL…ALLL.

It belongs to the complex I subunit 4L family. In terms of assembly, NDH-1 is composed of 14 different subunits. Subunits NuoA, H, J, K, L, M, N constitute the membrane sector of the complex.

The protein localises to the cell inner membrane. It catalyses the reaction a quinone + NADH + 5 H(+)(in) = a quinol + NAD(+) + 4 H(+)(out). In terms of biological role, NDH-1 shuttles electrons from NADH, via FMN and iron-sulfur (Fe-S) centers, to quinones in the respiratory chain. The immediate electron acceptor for the enzyme in this species is believed to be ubiquinone. Couples the redox reaction to proton translocation (for every two electrons transferred, four hydrogen ions are translocated across the cytoplasmic membrane), and thus conserves the redox energy in a proton gradient. The sequence is that of NADH-quinone oxidoreductase subunit K from Rhodopseudomonas palustris (strain HaA2).